The sequence spans 391 residues: Ribonuclease 3-like protein 2 (391 aa).

The Nuclear export signal signature appears at 7 to 26 (PEYNFPAITRCSLSNSLPHR). The region spanning 60–203 (MEAVEKILNY…LAGAVYVDVN (144 aa)) is the RNase III domain. Positions 96, 189, and 192 each coordinate Mg(2+). 2 DRBM domains span residues 218–294 (EPIV…KLSE) and 313–387 (HAKT…ALRK). Cys-240 and Cys-322 form a disulfide bridge. Positions 371 to 387 (KKAESSSAYHMIRALRK) match the Bipartite nuclear localization motif.

In terms of assembly, homodimer; disulfide-linked. Mg(2+) serves as cofactor. It depends on Mn(2+) as a cofactor. In terms of tissue distribution, expressed in seeds, leaves and flower buds.

The protein localises to the nucleus. Its subcellular location is the cytoplasm. Its function is as follows. Ribonuclease that cleaves double-stranded RNA (dsRNA). Required for 3'-external transcribed spacer (ETS) cleavage of the pre-rRNA precursors. May promote the production of 21 nucleotide small interfering RNA (siRNA) during post-transcriptional gene silencing (PTGS). The chain is Ribonuclease 3-like protein 2 (RTL2) from Arabidopsis thaliana (Mouse-ear cress).